A 230-amino-acid polypeptide reads, in one-letter code: Orotidine 5'-phosphate decarboxylase (230 aa).

Residues aspartate 11, lysine 34, 61-70 (DLKLHDIPNT), threonine 117, arginine 179, glutamine 188, glycine 208, and arginine 209 contribute to the substrate site. The Proton donor role is filled by lysine 63.

This sequence belongs to the OMP decarboxylase family. Type 1 subfamily. As to quaternary structure, homodimer.

It catalyses the reaction orotidine 5'-phosphate + H(+) = UMP + CO2. The protein operates within pyrimidine metabolism; UMP biosynthesis via de novo pathway; UMP from orotate: step 2/2. Its function is as follows. Catalyzes the decarboxylation of orotidine 5'-monophosphate (OMP) to uridine 5'-monophosphate (UMP). The protein is Orotidine 5'-phosphate decarboxylase of Streptococcus pyogenes serotype M1.